The following is a 496-amino-acid chain: Ribose import ATP-binding protein RbsA (496 aa).

ABC transporter domains lie at 5–242 (IEMK…VGRS) and 252–496 (SQIG…TGGE). Residue 37-44 (GENGAGKS) participates in ATP binding.

It belongs to the ABC transporter superfamily. Ribose importer (TC 3.A.1.2.1) family. The complex is composed of an ATP-binding protein (RbsA), two transmembrane proteins (RbsC) and a solute-binding protein (RbsB).

The protein localises to the cell membrane. The catalysed reaction is D-ribose(out) + ATP + H2O = D-ribose(in) + ADP + phosphate + H(+). In terms of biological role, part of the ABC transporter complex RbsABC involved in ribose import. Responsible for energy coupling to the transport system. This chain is Ribose import ATP-binding protein RbsA, found in Bacillus cereus (strain ATCC 14579 / DSM 31 / CCUG 7414 / JCM 2152 / NBRC 15305 / NCIMB 9373 / NCTC 2599 / NRRL B-3711).